The chain runs to 611 residues: Chaperone protein HscA (611 aa).

It belongs to the heat shock protein 70 family.

In terms of biological role, chaperone involved in the maturation of iron-sulfur cluster-containing proteins. Has a low intrinsic ATPase activity which is markedly stimulated by HscB. Involved in the maturation of IscU. This Buchnera aphidicola subsp. Acyrthosiphon pisum (strain 5A) protein is Chaperone protein HscA.